The chain runs to 140 residues: Large ribosomal subunit protein uL11 (140 aa).

The protein belongs to the universal ribosomal protein uL11 family. As to quaternary structure, part of the ribosomal stalk of the 50S ribosomal subunit. Interacts with L10 and the large rRNA to form the base of the stalk. L10 forms an elongated spine to which L12 dimers bind in a sequential fashion forming a multimeric L10(L12)X complex. Post-translationally, one or more lysine residues are methylated.

Functionally, forms part of the ribosomal stalk which helps the ribosome interact with GTP-bound translation factors. The chain is Large ribosomal subunit protein uL11 from Solidesulfovibrio magneticus (strain ATCC 700980 / DSM 13731 / RS-1) (Desulfovibrio magneticus).